The following is a 261-amino-acid chain: U11/U12 small nuclear ribonucleoprotein 31 kDa protein (261 aa).

The segment at 18–51 is disordered; sequence YYRYSSVAAPPPSNPKHQPSSSAKSSAPGGGSGG. An RRM domain is found at 57–135; the sequence is STLYVSNLDF…RKLTVSIAAD (79 aa). The CCHC-type zinc finger occupies 153-169; sequence RCYECGDEGHLSYECPK. The interval 165–261 is disordered; the sequence is YECPKNQLGP…YFSDESDDED (97 aa). A compositionally biased stretch (basic and acidic residues) spans 226–235; sequence AGERLRKREA.

Component of the U11/U12 snRNPs that are part of the U12-type spliceosome. In terms of tissue distribution, ubiquitous. Abundantly expressed in the shoot apical neristem.

The protein localises to the nucleus. RNA chaperone required for proper U12 intron splicing and for normal growth and development of plants. Mainly responsible for meristem activity. Plays a role in regulating cell division. The protein is U11/U12 small nuclear ribonucleoprotein 31 kDa protein (SNRNP31) of Arabidopsis thaliana (Mouse-ear cress).